We begin with the raw amino-acid sequence, 40 residues long: Photosystem II reaction center protein J (40 aa).

Residues 8 to 28 (IPLWLVGTVTGTLVIGLMGIF) form a helical membrane-spanning segment.

The protein belongs to the PsbJ family. In terms of assembly, PSII is composed of 1 copy each of membrane proteins PsbA, PsbB, PsbC, PsbD, PsbE, PsbF, PsbH, PsbI, PsbJ, PsbK, PsbL, PsbM, PsbT, PsbX, PsbY, PsbZ, Psb30/Ycf12, at least 3 peripheral proteins of the oxygen-evolving complex and a large number of cofactors. It forms dimeric complexes.

It localises to the plastid. The protein localises to the chloroplast thylakoid membrane. Functionally, one of the components of the core complex of photosystem II (PSII). PSII is a light-driven water:plastoquinone oxidoreductase that uses light energy to abstract electrons from H(2)O, generating O(2) and a proton gradient subsequently used for ATP formation. It consists of a core antenna complex that captures photons, and an electron transfer chain that converts photonic excitation into a charge separation. This is Photosystem II reaction center protein J from Psilotum nudum (Whisk fern).